The following is a 245-amino-acid chain: Orotidine 5'-phosphate decarboxylase (245 aa).

Substrate-binding positions include aspartate 22, lysine 44, aspartate 71–threonine 80, threonine 131, arginine 192, glutamine 201, glycine 221, and arginine 222. The active-site Proton donor is lysine 73.

The protein belongs to the OMP decarboxylase family. Type 1 subfamily. As to quaternary structure, homodimer.

The catalysed reaction is orotidine 5'-phosphate + H(+) = UMP + CO2. It functions in the pathway pyrimidine metabolism; UMP biosynthesis via de novo pathway; UMP from orotate: step 2/2. Functionally, catalyzes the decarboxylation of orotidine 5'-monophosphate (OMP) to uridine 5'-monophosphate (UMP). This chain is Orotidine 5'-phosphate decarboxylase, found in Escherichia coli O45:K1 (strain S88 / ExPEC).